The chain runs to 712 residues: Polyribonucleotide nucleotidyltransferase (712 aa).

Positions 488 and 494 each coordinate Mg(2+). A KH domain is found at 555 to 614; the sequence is PKIETINIPTDKIREVIGSGGKVIREIVATTGAKVDINDDGVVKVSASDGAKIKAAIDWI. In terms of domain architecture, S1 motif spans 624 to 692; the sequence is GKIYDGKVVK…DRGKTKLSMK (69 aa).

This sequence belongs to the polyribonucleotide nucleotidyltransferase family. The cofactor is Mg(2+).

The protein resides in the cytoplasm. It catalyses the reaction RNA(n+1) + phosphate = RNA(n) + a ribonucleoside 5'-diphosphate. In terms of biological role, involved in mRNA degradation. Catalyzes the phosphorolysis of single-stranded polyribonucleotides processively in the 3'- to 5'-direction. This Caulobacter vibrioides (strain NA1000 / CB15N) (Caulobacter crescentus) protein is Polyribonucleotide nucleotidyltransferase.